The primary structure comprises 456 residues: Phosphomannomutase (456 aa).

The active-site Phosphoserine intermediate is the S98. Residues S98, D245, D247, and D249 each contribute to the Mg(2+) site.

This sequence belongs to the phosphohexose mutase family. Mg(2+) is required as a cofactor.

It catalyses the reaction alpha-D-mannose 1-phosphate = D-mannose 6-phosphate. Its pathway is nucleotide-sugar biosynthesis; GDP-alpha-D-mannose biosynthesis; alpha-D-mannose 1-phosphate from D-fructose 6-phosphate: step 2/2. It participates in bacterial outer membrane biogenesis; LPS O-antigen biosynthesis. Functionally, involved in GDP-mannose biosynthesis which serves as the activated sugar nucleotide precursor for mannose residues in cell surface polysaccharides. This enzyme participates in synthesis of the LPS O antigen. This chain is Phosphomannomutase (manB), found in Salmonella montevideo.